We begin with the raw amino-acid sequence, 146 residues long: Ribosome maturation factor RimP (146 aa).

This sequence belongs to the RimP family.

The protein localises to the cytoplasm. Functionally, required for maturation of 30S ribosomal subunits. The sequence is that of Ribosome maturation factor RimP from Helicobacter pylori (strain HPAG1).